The primary structure comprises 1712 residues: Neurexin-2 (1712 aa).

Residues 1 to 28 form the signal peptide; it reads MASGSRWRPTPPPLLLLLLLALAARADG. The region spanning 29–206 is the Laminin G-like 1 domain; that stretch reads LEFGGGPGQW…LRGATADPLC (178 aa). Topologically, residues 29–1636 are extracellular; the sequence is LEFGGGPGQW…EVIRESSSTT (1608 aa). A glycan (N-linked (GlcNAc...) asparagine) is linked at asparagine 60. An EGF-like 1 domain is found at 202–242; it reads ADPLCAPARNPCANGGLCTVLAPGEVGCDCSHTGFGGKFCS. 3 cysteine pairs are disulfide-bonded: cysteine 206-cysteine 219, cysteine 213-cysteine 229, and cysteine 231-cysteine 241. Laminin G-like domains follow at residues 289–486 and 493–686; these read VATF…SFRC and DPVT…APFC. Position 335 (aspartate 335) interacts with Ca(2+). Residue asparagine 338 is glycosylated (N-linked (GlcNAc...) asparagine). 2 residues coordinate Ca(2+): leucine 352 and methionine 420. Cystine bridges form between cysteine 450–cysteine 486, cysteine 657–cysteine 686, cysteine 694–cysteine 705, cysteine 699–cysteine 714, and cysteine 716–cysteine 726. An EGF-like 2 domain is found at 690 to 727; that stretch reads TLKQCASAPCRNGGVCREGWNRFICDCIGTGFLGRVCE. 2 Laminin G-like domains span residues 732–904 and 918–1093; these read VLSY…ITYC and DPVT…ERGC. Ca(2+)-binding residues include aspartate 779 and leucine 796. Asparagine 841 carries N-linked (GlcNAc...) asparagine glycosylation. Residue arginine 854 coordinates Ca(2+). 4 cysteine pairs are disulfide-bonded: cysteine 1065-cysteine 1093, cysteine 1100-cysteine 1111, cysteine 1105-cysteine 1120, and cysteine 1122-cysteine 1132. Residues 1096–1133 form the EGF-like 3 domain; the sequence is PSTTCTEESCANQGVCLQQWDGFTCDCTMTSYGGPVCN. A Laminin G-like 6 domain is found at 1137 to 1345; the sequence is TTYIFGKGGA…HLRLVGEGPS (209 aa). The Ca(2+) site is built by aspartate 1189 and valine 1206. A glycan (N-linked (GlcNAc...) asparagine) is linked at asparagine 1236. 2 residues coordinate Ca(2+): isoleucine 1288 and asparagine 1290. The disordered stretch occupies residues 1373-1392; it reads ATTTTRRGRSPTLRDSTTQN. An O-linked (Xyl...) (heparan sulfate) serine glycan is attached at serine 1400. Disordered regions lie at residues 1458–1489 and 1525–1626; these read ATQD…CEEP and TLLS…PGAV. A helical membrane pass occupies residues 1637–1657; that stretch reads GMVVGIVAAAALCILILLYAM. Topologically, residues 1658–1712 are cytoplasmic; that stretch reads YKYRNRDEGSYQVDQSRNYISNSAQSNGAVVKEKAPAAPKTPSKAKKNKDKEYYV. The disordered stretch occupies residues 1679 to 1712; the sequence is NSAQSNGAVVKEKAPAAPKTPSKAKKNKDKEYYV.

Belongs to the neurexin family. The laminin G-like domain 1 binds to NXPH1. Interacts with PATJ. Interacts with CBLN1, CBLN2 and, less avidly, with CBLN4. Specific isoforms bind neuroligins NLGN1, NLGN2 and NLGN3. Specific isoforms bind to alpha-dystroglycan. Interacts (via Laminin G-like 1 domain) with IGSF21 (Ig-like 1 domain) in a trans-interaction manner. Interacts with CLSTN3. O-glycosylated; contains heparan sulfate. Heparan sulfate attachment is required for synapse development by mediating interactions with neuroligins. As to expression, predominantly expressed in brain.

It is found in the presynaptic cell membrane. In terms of biological role, neuronal cell surface protein that may be involved in cell recognition and cell adhesion. May mediate intracellular signaling. The chain is Neurexin-2 (NRXN2) from Homo sapiens (Human).